We begin with the raw amino-acid sequence, 388 residues long: Na(+)/H(+) antiporter NhaA (388 aa).

Transmembrane regions (helical) follow at residues 14 to 34 (GGII…MGAT), 59 to 79 (MLLW…GLEV), 95 to 115 (VFPV…YLAF), 125 to 145 (GWAI…ALLG), 154 to 174 (IFLM…IALF), 179 to 199 (LSIV…LLNL), 219 to 239 (VLKS…FIPL), 254 to 274 (ILHP…NAGV), 292 to 312 (IIAG…WLAL), 328 to 348 (IMAV…IASL), and 356 to 376 (ALIN…AVVG).

The protein belongs to the NhaA Na(+)/H(+) (TC 2.A.33) antiporter family.

It localises to the cell inner membrane. The catalysed reaction is Na(+)(in) + 2 H(+)(out) = Na(+)(out) + 2 H(+)(in). Functionally, na(+)/H(+) antiporter that extrudes sodium in exchange for external protons. In Salmonella arizonae (strain ATCC BAA-731 / CDC346-86 / RSK2980), this protein is Na(+)/H(+) antiporter NhaA.